Reading from the N-terminus, the 259-residue chain is Phosphatidylglycerol--prolipoprotein diacylglyceryl transferase (259 aa).

4 consecutive transmembrane segments (helical) span residues 12–32 (LAIH…VYLA), 41–61 (ISSD…IVGA), 80–100 (IIAI…GALV), and 109–129 (VLNP…AQAI). Arg131 serves as a coordination point for a 1,2-diacyl-sn-glycero-3-phospho-(1'-sn-glycerol). Helical transmembrane passes span 167-187 (IPTF…IMMW), 194-214 (LLDG…RLVI), and 226-246 (GIRI…IFVI).

The protein belongs to the Lgt family.

The protein resides in the cell membrane. The enzyme catalyses L-cysteinyl-[prolipoprotein] + a 1,2-diacyl-sn-glycero-3-phospho-(1'-sn-glycerol) = an S-1,2-diacyl-sn-glyceryl-L-cysteinyl-[prolipoprotein] + sn-glycerol 1-phosphate + H(+). Its pathway is protein modification; lipoprotein biosynthesis (diacylglyceryl transfer). Functionally, catalyzes the transfer of the diacylglyceryl group from phosphatidylglycerol to the sulfhydryl group of the N-terminal cysteine of a prolipoprotein, the first step in the formation of mature lipoproteins. The protein is Phosphatidylglycerol--prolipoprotein diacylglyceryl transferase of Streptococcus pyogenes serotype M3 (strain ATCC BAA-595 / MGAS315).